The primary structure comprises 599 residues: Elongation factor 4 (599 aa).

The tr-type G domain maps to 5-187; that stretch reads SHIRNFSIIA…RLVQTIPAPT (183 aa). Residues 17 to 22 and 134 to 137 contribute to the GTP site; these read DHGKST and NKMD.

Belongs to the TRAFAC class translation factor GTPase superfamily. Classic translation factor GTPase family. LepA subfamily.

It localises to the cell inner membrane. It catalyses the reaction GTP + H2O = GDP + phosphate + H(+). In terms of biological role, required for accurate and efficient protein synthesis under certain stress conditions. May act as a fidelity factor of the translation reaction, by catalyzing a one-codon backward translocation of tRNAs on improperly translocated ribosomes. Back-translocation proceeds from a post-translocation (POST) complex to a pre-translocation (PRE) complex, thus giving elongation factor G a second chance to translocate the tRNAs correctly. Binds to ribosomes in a GTP-dependent manner. This is Elongation factor 4 from Ectopseudomonas mendocina (strain ymp) (Pseudomonas mendocina).